We begin with the raw amino-acid sequence, 513 residues long: Steroid (22S)-hydroxylase (513 aa).

The chain crosses the membrane as a helical span at residues 8 to 28 (TLLPLLLLPSLLSLLLFLILL). The interval 252–277 (DIKEEDQEEEEVKTEDEAEMSKSDHV) is disordered. Residues 254–269 (KEEDQEEEEVKTEDEA) show a composition bias toward acidic residues. Residue C462 coordinates heme.

Belongs to the cytochrome P450 family. Heme serves as cofactor. Expressed in stems, leaves, shoots, and roots, with a higher expression in siliques and apical shoots.

The protein resides in the membrane. The enzyme catalyses a C27-steroid + reduced [NADPH--hemoprotein reductase] + O2 = a (22S)-22-hydroxy C27-steroid + oxidized [NADPH--hemoprotein reductase] + H2O + H(+). It carries out the reaction a C28-steroid + reduced [NADPH--hemoprotein reductase] + O2 = a (22S)-22-hydroxy C28-steroid + oxidized [NADPH--hemoprotein reductase] + H2O + H(+). It catalyses the reaction a C29-steroid + reduced [NADPH--hemoprotein reductase] + O2 = a (22S)-22-hydroxy C29-steroid + oxidized [NADPH--hemoprotein reductase] + H2O + H(+). The catalysed reaction is cholesterol + reduced [NADPH--hemoprotein reductase] + O2 = (22S)-22-hydroxycholesterol + oxidized [NADPH--hemoprotein reductase] + H2O + H(+). The enzyme catalyses cholestanol + reduced [NADPH--hemoprotein reductase] + O2 = (22S)-22-hydroxycholestanol + oxidized [NADPH--hemoprotein reductase] + H2O + H(+). It carries out the reaction campestanol + reduced [NADPH--hemoprotein reductase] + O2 = 6-deoxycathasterone + oxidized [NADPH--hemoprotein reductase] + H2O + H(+). It catalyses the reaction campesterol + reduced [NADPH--hemoprotein reductase] + O2 = (22S)-22-hydroxycampesterol + oxidized [NADPH--hemoprotein reductase] + H2O + H(+). The catalysed reaction is 6-oxocampestanol + reduced [NADPH--hemoprotein reductase] + O2 = cathasterone + oxidized [NADPH--hemoprotein reductase] + H2O + H(+). The enzyme catalyses sitosterol + reduced [NADPH--hemoprotein reductase] + O2 = (22S)-22-hydroxysitosterol + oxidized [NADPH--hemoprotein reductase] + H2O + H(+). It functions in the pathway plant hormone biosynthesis; brassinosteroid biosynthesis. Functionally, catalyzes the C22-alpha-hydroxylation step in brassinosteroids biosynthesis. Converts campesterol (CR) to (22S)-22-hydroxycampesterol (22-OHCR, 22-hydroxyCR), campestanol (CN) to 6-deoxycathasterone (6-deoxoCT), and 6-oxocampestanol (6-oxoCN) to cathasterone (CT). Can also use cholesterol and cholestanol as substrates. This Arabidopsis thaliana (Mouse-ear cress) protein is Steroid (22S)-hydroxylase.